The primary structure comprises 119 residues: Large ribosomal subunit protein bL20 (119 aa).

The protein belongs to the bacterial ribosomal protein bL20 family.

Functionally, binds directly to 23S ribosomal RNA and is necessary for the in vitro assembly process of the 50S ribosomal subunit. It is not involved in the protein synthesizing functions of that subunit. This is Large ribosomal subunit protein bL20 from Bordetella petrii (strain ATCC BAA-461 / DSM 12804 / CCUG 43448).